The following is a 106-amino-acid chain: Large ribosomal subunit protein uL24 (106 aa).

The segment covering 84 to 97 (EKIGRELGAKEKAR) has biased composition (basic and acidic residues). Residues 84 to 106 (EKIGRELGAKEKARLQKRKAAAK) form a disordered region.

This sequence belongs to the universal ribosomal protein uL24 family. Part of the 50S ribosomal subunit.

Functionally, one of two assembly initiator proteins, it binds directly to the 5'-end of the 23S rRNA, where it nucleates assembly of the 50S subunit. One of the proteins that surrounds the polypeptide exit tunnel on the outside of the subunit. The protein is Large ribosomal subunit protein uL24 of Anaeromyxobacter dehalogenans (strain 2CP-C).